The following is a 155-amino-acid chain: Small ribosomal subunit protein uS7 (155 aa).

It belongs to the universal ribosomal protein uS7 family. As to quaternary structure, part of the 30S ribosomal subunit. Contacts proteins S9 and S11.

One of the primary rRNA binding proteins, it binds directly to 16S rRNA where it nucleates assembly of the head domain of the 30S subunit. Is located at the subunit interface close to the decoding center, probably blocks exit of the E-site tRNA. This is Small ribosomal subunit protein uS7 from Thermotoga neapolitana (strain ATCC 49049 / DSM 4359 / NBRC 107923 / NS-E).